Reading from the N-terminus, the 637-residue chain is DNA mismatch repair protein MutL (637 aa).

2 disordered regions span residues 352-384 and 405-430; these read DDFT…NVLF and ASVE…AMEQ.

This sequence belongs to the DNA mismatch repair MutL/HexB family.

Functionally, this protein is involved in the repair of mismatches in DNA. It is required for dam-dependent methyl-directed DNA mismatch repair. May act as a 'molecular matchmaker', a protein that promotes the formation of a stable complex between two or more DNA-binding proteins in an ATP-dependent manner without itself being part of a final effector complex. The protein is DNA mismatch repair protein MutL of Halalkalibacterium halodurans (strain ATCC BAA-125 / DSM 18197 / FERM 7344 / JCM 9153 / C-125) (Bacillus halodurans).